A 744-amino-acid chain; its full sequence is Zinc finger protein 483 (744 aa).

The SCAN box domain occupies 52-134 (RQRFRWFCYS…TLIEDLTQML (83 aa)). The disordered stretch occupies residues 137 to 156 (KDPVSQDSTVSQEENSKEDK). The KRAB domain occupies 170 to 241 (ITLKDVAVNF…EEVSKSSRLD (72 aa)). Disordered regions lie at residues 263-308 (ESQQ…SPFG) and 350-385 (KEKT…KIHL). Positions 277–293 (NQGNSKGRVAQNKTLGS) are enriched in polar residues. 2 stretches are compositionally biased toward basic and acidic residues: residues 298-308 (KKFDPDKSPFG) and 350-363 (KEKT…KSND). 11 consecutive C2H2-type zinc fingers follow at residues 439–461 (HKCS…RRIH), 467–489 (YMCN…HRTH), 495–517 (FKCD…QRIH), 523–545 (YKCK…QRIH), 551–573 (YTCS…QRIH), 579–601 (YKCG…QRIH), 607–629 (YLCN…QRLH), 635–657 (YKCN…QRIH), 663–685 (YKCK…HRIH), 691–713 (YECN…LKIH), and 719–741 (YECN…RGFH).

This sequence belongs to the krueppel C2H2-type zinc-finger protein family.

Its subcellular location is the nucleus. Functionally, may be involved in transcriptional regulation. This is Zinc finger protein 483 (ZNF483) from Homo sapiens (Human).